The primary structure comprises 79 residues: Small ribosomal subunit protein bS18 (79 aa).

The protein belongs to the bacterial ribosomal protein bS18 family. As to quaternary structure, part of the 30S ribosomal subunit. Forms a tight heterodimer with protein bS6.

Functionally, binds as a heterodimer with protein bS6 to the central domain of the 16S rRNA, where it helps stabilize the platform of the 30S subunit. The protein is Small ribosomal subunit protein bS18 of Streptococcus suis (strain 98HAH33).